The sequence spans 633 residues: Probable potassium transport system protein Kup (633 aa).

A run of 12 helical transmembrane segments spans residues 19–39 (LGMLVAAVGVVYGDIGTSPLY), 61–81 (ILALIFWSLVWVVSIKYVLFI), 112–132 (VLVILGLIGASLFYGDSMITP), 148–168 (SGLEHWVVPLALVVLVALFLI), 179–199 (LFGPVMVAWFLVLGGLGINGI), 217–237 (FFIVHPGMGVAILGAVVLALT), 258–278 (WFALVLPALVLNYFGQGALLL), 290–310 (LLAPGWALIPLVVLATLATVI), 348–368 (IYIGAVNWSLMVGVILLVLGF), 380–400 (VAVTGTMLITSILVAAVMLLL), 405–425 (PVLAVPVLLGFLLVDGLFFAA), and 430–450 (IFQGGAFPVLAGIVLFILMTT).

Belongs to the HAK/KUP transporter (TC 2.A.72) family.

The protein localises to the cell inner membrane. The enzyme catalyses K(+)(in) + H(+)(in) = K(+)(out) + H(+)(out). Transport of potassium into the cell. Likely operates as a K(+):H(+) symporter. This is Probable potassium transport system protein Kup from Pseudomonas fluorescens (strain ATCC BAA-477 / NRRL B-23932 / Pf-5).